The sequence spans 132 residues: Holo-[acyl-carrier-protein] synthase (132 aa).

Mg(2+) is bound by residues aspartate 8 and glutamate 62.

This sequence belongs to the P-Pant transferase superfamily. AcpS family. Requires Mg(2+) as cofactor.

The protein localises to the cytoplasm. It carries out the reaction apo-[ACP] + CoA = holo-[ACP] + adenosine 3',5'-bisphosphate + H(+). Functionally, transfers the 4'-phosphopantetheine moiety from coenzyme A to a Ser of acyl-carrier-protein. This is Holo-[acyl-carrier-protein] synthase from Polaromonas sp. (strain JS666 / ATCC BAA-500).